The chain runs to 400 residues: Na(+)/H(+) antiporter NhaA (400 aa).

The next 11 helical transmembrane spans lie at 26–46 (AGGI…NSPL), 71–91 (LIHW…GMEV), 107–127 (IFPA…YWFI), 137–157 (GWAI…ALLS), 166–186 (IFLL…IALF), 189–209 (HGLS…LILL), 225–245 (AILW…GVII), 273–293 (FVIL…GIDV), 299–319 (PLLL…IFGF), 340–360 (IFAV…LASL), and 373–393 (LSRL…YLFL).

It belongs to the NhaA Na(+)/H(+) (TC 2.A.33) antiporter family.

The protein resides in the cell inner membrane. It carries out the reaction Na(+)(in) + 2 H(+)(out) = Na(+)(out) + 2 H(+)(in). Its function is as follows. Na(+)/H(+) antiporter that extrudes sodium in exchange for external protons. The chain is Na(+)/H(+) antiporter NhaA from Haemophilus influenzae (strain ATCC 51907 / DSM 11121 / KW20 / Rd).